The sequence spans 263 residues: MDIIQAKDIIIDFIGTKLEGTGIEGAVVGISGGIDSALVAYLSVEALGAENVLGIHMPEASTPKSEIEDASKVAEALGIDFKVINITNVLEVYRTAMPDIDGASAHVDGNLKARIRMSMLYYYANMFGRVVMGTGNKSEILLGYFTKYGDGGVDIEPIGDLYKTEVREMSKMLGVPESILEKAPSAGLWEGQTDEDDLGVTYETIDKVLQPILAGEGQERVHLKLGVPMEEISSILLRVRSNLHKRTTPQIAYLDDLRGDWLS.

29–36 (GISGGIDS) is an ATP binding site. Position 35 (Asp35) interacts with Mg(2+). Position 114 (Arg114) interacts with deamido-NAD(+). Position 134 (Thr134) interacts with ATP. A Mg(2+)-binding site is contributed by Glu139. Deamido-NAD(+)-binding residues include Lys147 and Asp154. Lys163 and Ser185 together coordinate ATP. A deamido-NAD(+)-binding site is contributed by 244 to 245 (HK).

It belongs to the NAD synthetase family. As to quaternary structure, homodimer.

It catalyses the reaction deamido-NAD(+) + NH4(+) + ATP = AMP + diphosphate + NAD(+) + H(+). It functions in the pathway cofactor biosynthesis; NAD(+) biosynthesis; NAD(+) from deamido-NAD(+) (ammonia route): step 1/1. Its function is as follows. Catalyzes the ATP-dependent amidation of deamido-NAD to form NAD. Uses ammonia as a nitrogen source. The protein is NH(3)-dependent NAD(+) synthetase of Methanococcoides burtonii (strain DSM 6242 / NBRC 107633 / OCM 468 / ACE-M).